We begin with the raw amino-acid sequence, 251 residues long: Guanine nucleotide-binding protein subunit gamma 3 (251 aa).

Over residues 1 to 10 the composition is skewed to gly residues; the sequence is MSAPSGGGEG. Residues 1 to 44 are disordered; that stretch reads MSAPSGGGEGGGKESAAGGVSSSSLAPSSLPPPRPKSPPEYPDL. Residues 14 to 28 are compositionally biased toward low complexity; that stretch reads ESAAGGVSSSSLAPS. The segment covering 29–41 has biased composition (pro residues); that stretch reads SLPPPRPKSPPEY. The G protein gamma domain maps to 46 to 126; that stretch reads GKRREAARVQ…LSLVSFCCCC (81 aa). Residue Cys-248 is modified to Cysteine methyl ester. Residue Cys-248 is the site of S-farnesyl cysteine attachment. The propeptide at 249-251 is removed in mature form; it reads LAF.

As to quaternary structure, g proteins are composed of 3 units, alpha, beta and gamma. In terms of tissue distribution, expressed in flowers and siliques.

Guanine nucleotide-binding proteins (G proteins) are involved as a modulator or transducer in various transmembrane signaling systems. The beta and gamma chains are required for the GTPase activity, for replacement of GDP by GTP, and for G protein-effector interaction. This chain is Guanine nucleotide-binding protein subunit gamma 3 (GG3), found in Arabidopsis thaliana (Mouse-ear cress).